Consider the following 383-residue polypeptide: 8-amino-7-oxononanoate synthase (383 aa).

Arginine 21 provides a ligand contact to substrate. 108–109 (GY) provides a ligand contact to pyridoxal 5'-phosphate. Residue histidine 133 participates in substrate binding. Pyridoxal 5'-phosphate contacts are provided by serine 179, histidine 207, and threonine 233. At lysine 236 the chain carries N6-(pyridoxal phosphate)lysine. Residue threonine 350 coordinates substrate.

It belongs to the class-II pyridoxal-phosphate-dependent aminotransferase family. BioF subfamily. As to quaternary structure, homodimer. It depends on pyridoxal 5'-phosphate as a cofactor.

The enzyme catalyses 6-carboxyhexanoyl-[ACP] + L-alanine + H(+) = (8S)-8-amino-7-oxononanoate + holo-[ACP] + CO2. The protein operates within cofactor biosynthesis; biotin biosynthesis. Its function is as follows. Catalyzes the decarboxylative condensation of pimeloyl-[acyl-carrier protein] and L-alanine to produce 8-amino-7-oxononanoate (AON), [acyl-carrier protein], and carbon dioxide. The sequence is that of 8-amino-7-oxononanoate synthase from Yersinia pseudotuberculosis serotype O:1b (strain IP 31758).